The primary structure comprises 344 residues: Selenide, water dikinase (344 aa).

Residue Cys16 is part of the active site. Residues Lys19 and 47–49 contribute to the ATP site; that span reads SRD. Position 50 (Asp50) interacts with Mg(2+). ATP-binding positions include Asp67, Asp90, and 138 to 140; that span reads GHS. Asp90 lines the Mg(2+) pocket. Asp226 serves as a coordination point for Mg(2+).

The protein belongs to the selenophosphate synthase 1 family. Class I subfamily. As to quaternary structure, homodimer. It depends on Mg(2+) as a cofactor.

It catalyses the reaction hydrogenselenide + ATP + H2O = selenophosphate + AMP + phosphate + 2 H(+). Functionally, synthesizes selenophosphate from selenide and ATP. The polypeptide is Selenide, water dikinase (Pseudomonas aeruginosa (strain ATCC 15692 / DSM 22644 / CIP 104116 / JCM 14847 / LMG 12228 / 1C / PRS 101 / PAO1)).